The primary structure comprises 183 residues: MGYPGKSHKTYDRPRKPWEADRMANEVELIKTYGLRNKRELWKAESILRKYRRVGRMLLASKARGEARADIEAAAVINRLSRFGILKDGADLDAILSLKITDILERRLQTQVYRQGLANTIRQARQFITHGHIQVAGQRVTVPSYLVKRGDEMTIDYYAGSPLAREGHPERSSKIVARTGGSA.

One can recognise an S4 RNA-binding domain in the interval 106-168 (RRLQTQVYRQ…AGSPLAREGH (63 aa)).

Belongs to the universal ribosomal protein uS4 family. In terms of assembly, part of the 30S ribosomal subunit. Contacts protein S5. The interaction surface between S4 and S5 is involved in control of translational fidelity.

One of the primary rRNA binding proteins, it binds directly to 16S rRNA where it nucleates assembly of the body of the 30S subunit. Functionally, with S5 and S12 plays an important role in translational accuracy. The polypeptide is Small ribosomal subunit protein uS4 (Methanothrix thermoacetophila (strain DSM 6194 / JCM 14653 / NBRC 101360 / PT) (Methanosaeta thermophila)).